A 256-amino-acid chain; its full sequence is Glutamate racemase (256 aa).

Residues 11–12 and 43–44 each bind substrate; these read DS and YG. Cys74 acts as the Proton donor/acceptor in catalysis. 75–76 is a binding site for substrate; that stretch reads NT. Cys182 serves as the catalytic Proton donor/acceptor. 183–184 serves as a coordination point for substrate; the sequence is TH.

It belongs to the aspartate/glutamate racemases family.

It carries out the reaction L-glutamate = D-glutamate. It participates in cell wall biogenesis; peptidoglycan biosynthesis. In terms of biological role, provides the (R)-glutamate required for cell wall biosynthesis. This is Glutamate racemase from Leptospira interrogans serogroup Icterohaemorrhagiae serovar Lai (strain 56601).